A 477-amino-acid polypeptide reads, in one-letter code: MKILHICSEMYPLIKTGGLADVMGALPYAQQSAGNDVRVLIPYYPQVASKLGETVEVATVGTFAGVVTVRFAYLNGLGVYVIDAPHLFDRRLPYYDDNYQDYTDNYKRFALLGYLGAQLASGLDHWWGRSDVLHAHDWQAGLACAYLKSWNSPVKSVFTIHNIAYPGRFQAYHLAELALPWEFFHVNGLEFYGEISYLKAGLFYADRVTAVSPTYAREITEQIAGAGMHGLLQQRLAEGALRGILNGVDDTVWNPETDTNIVANYRPNYMQGKGKNKSELQRYFGLPEDKDALLFVMVTRLTEQKGADFLLARIDQIMQHNVQLVVLGSGSPDLEWALRDAQSRYPHKIGLKIGYDEALSHQIIAGGDVILVPSRFEPCGLTQLYGLKYGTLPLVRRTGGLADTVNDAHKESIENRTATGFVFSYPDADNFYDAVLRAINLWGKNKLWSSVRQNALAQDFGWAKVAQQYQELYYEIV.

Lys-15 contacts ADP-alpha-D-glucose.

The protein belongs to the glycosyltransferase 1 family. Bacterial/plant glycogen synthase subfamily.

The enzyme catalyses [(1-&gt;4)-alpha-D-glucosyl](n) + ADP-alpha-D-glucose = [(1-&gt;4)-alpha-D-glucosyl](n+1) + ADP + H(+). It participates in glycan biosynthesis; glycogen biosynthesis. Its function is as follows. Synthesizes alpha-1,4-glucan chains using ADP-glucose. This chain is Glycogen synthase, found in Glaesserella parasuis serovar 5 (strain SH0165) (Haemophilus parasuis).